We begin with the raw amino-acid sequence, 552 residues long: MSGPRPVRAPRGSALTALGWQQEAALRMLQNNLDPEVAEHPDKLVVYGGTGKAARDWRSFDAMVRTLQTLKQDETMLVQSGRPVGVMQTHEWAPRVLIANSNLVGDWANWEEFRRLEALGLTMYGQMTAGSWIYIGTQGILQGTYETFAAVAAKKFGGTLAGTITLTAGLGGMGGAQPLAVTMNDGVAICIDVDPRAIERRIEHRYLDVKADSPEHALQLAVEARDARRPLSIGLLGNAAELLPRMLAESAPIDIVTDQTSAHDPLAYLPLGVDFDDMAGLAAEKPADFTRRARESMARHVEAMVGFMDAGAEVFDYGNSIRGEARLAGYDRAFDFPGFVPAYIRPLFCEGKGPFRWAALSGEASDIHKTDKAMLELFPENESLHRWIRMAGERVHFQGLPARICWLGYGERDKAGERFNDMVASGELAAPLAIGRDHLDCGSVASPYRETEAMLDGSDAIADWPLLNAMVNVASGASWVSLHHGGGVGMGRSIHAGQVSVADGTKLAGEKIRRVLTNDPGMGVIRHVDAGYDIAENVAADQGVRVPMTEGN.

NAD(+) is bound by residues 48–49, glutamine 126, 172–174, aspartate 192, 238–239, 259–263, 268–269, and tyrosine 317; these read GG, GMG, NA, QTSAH, and YL. Cysteine 405 is a catalytic residue. An NAD(+)-binding site is contributed by glycine 487.

It belongs to the urocanase family. The cofactor is NAD(+).

The protein resides in the cytoplasm. The enzyme catalyses 4-imidazolone-5-propanoate = trans-urocanate + H2O. It functions in the pathway amino-acid degradation; L-histidine degradation into L-glutamate; N-formimidoyl-L-glutamate from L-histidine: step 2/3. Its function is as follows. Catalyzes the conversion of urocanate to 4-imidazolone-5-propionate. The polypeptide is Urocanate hydratase (Streptomyces griseus subsp. griseus (strain JCM 4626 / CBS 651.72 / NBRC 13350 / KCC S-0626 / ISP 5235)).